Consider the following 465-residue polypeptide: Argininosuccinate lyase (465 aa).

This sequence belongs to the lyase 1 family. Argininosuccinate lyase subfamily.

It localises to the cytoplasm. It catalyses the reaction 2-(N(omega)-L-arginino)succinate = fumarate + L-arginine. It functions in the pathway amino-acid biosynthesis; L-arginine biosynthesis; L-arginine from L-ornithine and carbamoyl phosphate: step 3/3. The chain is Argininosuccinate lyase from Hyphomonas neptunium (strain ATCC 15444).